We begin with the raw amino-acid sequence, 341 residues long: Anthranilate phosphoribosyltransferase (341 aa).

Residues Gly79, 82 to 83, Thr87, 89 to 92, 107 to 115, and Ser119 each bind 5-phospho-alpha-D-ribose 1-diphosphate; these read GD, NIST, and KHGNRAVSS. Gly79 is an anthranilate binding site. Position 91 (Ser91) interacts with Mg(2+). Asn110 contributes to the anthranilate binding site. Arg165 is a binding site for anthranilate. Residues Asp224 and Glu225 each coordinate Mg(2+).

Belongs to the anthranilate phosphoribosyltransferase family. In terms of assembly, homodimer. Mg(2+) serves as cofactor.

The catalysed reaction is N-(5-phospho-beta-D-ribosyl)anthranilate + diphosphate = 5-phospho-alpha-D-ribose 1-diphosphate + anthranilate. Its pathway is amino-acid biosynthesis; L-tryptophan biosynthesis; L-tryptophan from chorismate: step 2/5. In terms of biological role, catalyzes the transfer of the phosphoribosyl group of 5-phosphorylribose-1-pyrophosphate (PRPP) to anthranilate to yield N-(5'-phosphoribosyl)-anthranilate (PRA). The sequence is that of Anthranilate phosphoribosyltransferase from Bacillus cereus (strain AH187).